A 364-amino-acid polypeptide reads, in one-letter code: MKRREVLNTAAIATATTALVSCTQTNTSSVQAGLPNVRWRMTTSWPKSLGTFIGAETVAKRVAEMTNGRFKITPFAAGELVPGLQVLDAVQAGTVECGHTSSYYYIGKSPALAFATSVPFGLNAQQQYAWLYQGGGLAAIQKIYANFNVINFPAGSTGAQMGGWFKKEIKSVSDLKGLKMRIPGLGGQVMSRLGVNVQVLPGGEIYLALDRGAIDAAEWVGPYDDEKLGLNKAAQFYYYPGWWEPGPTLDVLVNLNAWNRLPKEYQEIFKTATVEANLTMLNQYDALNGEALTRLLAGGTKLVPYSQEIMQAAQKISFDIFEENASKDAAFKQVYEQWKAFRKQIFAWNRVNELSYENFASSSQ.

An N-terminal signal peptide occupies residues 1–26 (MKRREVLNTAAIATATTALVSCTQTN). Residues 103–104 (YY), glutamine 160, and arginine 181 contribute to the substrate site. A Na(+)-binding site is contributed by glutamine 160. Positions 218, 219, and 244 each coordinate Na(+).

The protein belongs to the bacterial solute-binding protein 7 family. As to quaternary structure, homodimer. The complex comprises the extracytoplasmic solute receptor protein all3028, and the two putative transmembrane proteins alr3026 and alr3027.

The protein localises to the periplasm. With respect to regulation, pyruvate uptake inhibited by 2-oxobutyrate, 2-oxovalerate, 2-oxoisovalerate, 2-oxoisocaproate and 2-oxo-3-methylvalerate. Part of the tripartite ATP-independent periplasmic (TRAP) transport system involved in the uptake of monocarboxylate 2-oxoacids. This protein specifically binds monocarboxylate 2-oxoacids including pyruvate, 2-oxobutyrate, 2-oxovalerate, 2-oxoisovalerate, 2-oxoisocaproate and 2-oxo-3-methylvalerate. Is not able to bind mannitol. In Nostoc sp. (strain PCC 7120 / SAG 25.82 / UTEX 2576), this protein is Monocarboxylate 2-oxoacid-binding periplasmic protein all3028.